Reading from the N-terminus, the 113-residue chain is Ribosome-binding factor A (113 aa).

The protein belongs to the RbfA family. In terms of assembly, monomer. Binds 30S ribosomal subunits, but not 50S ribosomal subunits or 70S ribosomes.

It is found in the cytoplasm. Functionally, one of several proteins that assist in the late maturation steps of the functional core of the 30S ribosomal subunit. Associates with free 30S ribosomal subunits (but not with 30S subunits that are part of 70S ribosomes or polysomes). Required for efficient processing of 16S rRNA. May interact with the 5'-terminal helix region of 16S rRNA. This chain is Ribosome-binding factor A, found in Oceanobacillus iheyensis (strain DSM 14371 / CIP 107618 / JCM 11309 / KCTC 3954 / HTE831).